The chain runs to 237 residues: Ribonuclease PH (237 aa).

Residues Arg86 and 124–126 (GTR) each bind phosphate.

This sequence belongs to the RNase PH family. In terms of assembly, homohexameric ring arranged as a trimer of dimers.

The enzyme catalyses tRNA(n+1) + phosphate = tRNA(n) + a ribonucleoside 5'-diphosphate. Its function is as follows. Phosphorolytic 3'-5' exoribonuclease that plays an important role in tRNA 3'-end maturation. Removes nucleotide residues following the 3'-CCA terminus of tRNAs; can also add nucleotides to the ends of RNA molecules by using nucleoside diphosphates as substrates, but this may not be physiologically important. Probably plays a role in initiation of 16S rRNA degradation (leading to ribosome degradation) during starvation. This Shewanella loihica (strain ATCC BAA-1088 / PV-4) protein is Ribonuclease PH.